Consider the following 363-residue polypeptide: MRIAVDAMGGDYAPEEIIKGALLAHRYLQVGIALVGRPDALEPFLPRPLPPGITVVPAEEVVGMAEEPLAVRRKPQASINVSMQQVRAKQADAVVAAGNTGATMAAAYLNLGRLAGIDRPAIGALLPTLKGKPVLLLDVGANVDCRPRFLEQFARMGSLYCQCVLGIEKPRVGLLNIGEEPNKGNDLALATHQRLTQLPGIHFAGNAEGRDVLTGDFDVVVCDGFVGNALLKFAESVGQVITQVLREELPRGWRGKLGCWLLQPNLKQVKRRMDYVEYGGALLLGVNGICVITHGSSKAAMVYHAIRLAKEAAEQKILQRLQAEMADSHPSKVNAGENAPPLASASNPSPEALPVGSLDRVEG.

The segment at 326–363 (ADSHPSKVNAGENAPPLASASNPSPEALPVGSLDRVEG) is disordered. Residues 337–354 (ENAPPLASASNPSPEALP) are compositionally biased toward low complexity.

This sequence belongs to the PlsX family. In terms of assembly, homodimer. Probably interacts with PlsY.

It is found in the cytoplasm. It carries out the reaction a fatty acyl-[ACP] + phosphate = an acyl phosphate + holo-[ACP]. Its pathway is lipid metabolism; phospholipid metabolism. Catalyzes the reversible formation of acyl-phosphate (acyl-PO(4)) from acyl-[acyl-carrier-protein] (acyl-ACP). This enzyme utilizes acyl-ACP as fatty acyl donor, but not acyl-CoA. This chain is Phosphate acyltransferase, found in Synechococcus sp. (strain JA-3-3Ab) (Cyanobacteria bacterium Yellowstone A-Prime).